A 206-amino-acid chain; its full sequence is Tektin bundle-interacting protein 1 (206 aa).

Microtubule inner protein component of sperm flagellar doublet microtubules.

The protein localises to the cytoplasm. It is found in the cytoskeleton. The protein resides in the cilium axoneme. It localises to the flagellum axoneme. In terms of biological role, microtubule inner protein (MIP) part of the dynein-decorated doublet microtubules (DMTs) in cilia axoneme, which is required for motile cilia beating. Located at the center of the tektin bundle where may function to recruit tektins or stabilize the bundle. In Mus musculus (Mouse), this protein is Tektin bundle-interacting protein 1.